We begin with the raw amino-acid sequence, 752 residues long: Sialidase 85-1.1 (752 aa).

The signal sequence occupies residues 1-23 (MSRRVFASAVLLLIVVTMCCGGA). BNR repeat units lie at residues 274–285 (IYSKDNGSTWSL) and 319–330 (YVSRDMGTTWTE). A disordered region spans residues 693–725 (APEPQVKIAPKPAAPAAPAGNEETARETGDGGA). A compositionally biased stretch (low complexity) spans 701–711 (APKPAAPAAPA).

The protein belongs to the glycosyl hydrolase 33 family.

The enzyme catalyses Hydrolysis of alpha-(2-&gt;3)-, alpha-(2-&gt;6)-, alpha-(2-&gt;8)- glycosidic linkages of terminal sialic acid residues in oligosaccharides, glycoproteins, glycolipids, colominic acid and synthetic substrates.. Developmentally regulated neuraminidase implicated in parasite invasion of cells. May contribute to the pathology during T.cruzi infection by cleaving sialic acid from cells of the immune system. The polypeptide is Sialidase 85-1.1 (SA85-1.1) (Trypanosoma cruzi).